The primary structure comprises 204 residues: Guanylate kinase (204 aa).

The 179-residue stretch at 18–196 (PKLFTISAPA…SYEVLKSIFI (179 aa)) folds into the Guanylate kinase-like domain. Position 25–32 (25–32 (APAGAGKT)) interacts with ATP.

The protein belongs to the guanylate kinase family.

It is found in the cytoplasm. It catalyses the reaction GMP + ATP = GDP + ADP. In terms of biological role, essential for recycling GMP and indirectly, cGMP. The sequence is that of Guanylate kinase from Chlamydia abortus (strain DSM 27085 / S26/3) (Chlamydophila abortus).